The following is a 469-amino-acid chain: GDNF family receptor alpha-1 (469 aa).

The first 27 residues, 1-27, serve as a signal peptide directing secretion; that stretch reads MFLALLYLALPLADVLLSAEVSGLPGG. A run of 3 repeats spans residues 28–116, 149–237, and 238–341. Residues C39 and C45 are joined by a disulfide bond. N62 and N163 each carry an N-linked (GlcNAc...) asparagine glycan. Cystine bridges form between C153–C213, C160–C166, C177–C191, C186–C232, C215–C220, C242–C312, C249–C255, C266–C284, C276–C336, and C314–C324. Residues N346 and N405 are each glycosylated (N-linked (GlcNAc...) asparagine). A lipid anchor (GPI-anchor amidated serine) is attached at S430. Residues 431 to 469 constitute a propeptide, removed in mature form; the sequence is HISSENSFALPTSFYPSTPLILMTIALSLFLFLSSSVVL.

This sequence belongs to the GDNFR family. As to quaternary structure, interacts with GDNF ligand and RET: forms a 2:2:2 ternary complex composed of GDNF ligand, GFRA1 and RET receptor.

It localises to the cell membrane. Its subcellular location is the golgi apparatus. It is found in the trans-Golgi network. The protein localises to the endosome. The protein resides in the multivesicular body. Coreceptor for GDNF, a neurotrophic factor that enhances survival and morphological differentiation of dopaminergic neurons and increases their high-affinity dopamine uptake. GDNF-binding leads to autophosphorylation and activation of the RET receptor. The protein is GDNF family receptor alpha-1 (GFRA1) of Gallus gallus (Chicken).